The chain runs to 339 residues: Riboflavin biosynthesis protein RibD (339 aa).

The segment at M1–G152 is deaminase. The 123-residue stretch at K7–R129 folds into the CMP/dCMP-type deaminase domain. H57 contacts Zn(2+). Residue E59 is the Proton donor of the active site. Residues C82 and C91 each contribute to the Zn(2+) site. The segment at L153–R339 is reductase. NADP(+)-binding positions include A161 and S168–A171. Residue S175 participates in substrate binding. W177 serves as a coordination point for NADP(+). R191 contacts substrate. NADP(+) contacts are provided by T203 and D207. The substrate site is built by L211, R214, and E272. Residue G274–A280 coordinates NADP(+).

It in the N-terminal section; belongs to the cytidine and deoxycytidylate deaminase family. This sequence in the C-terminal section; belongs to the HTP reductase family. Requires Zn(2+) as cofactor.

The catalysed reaction is 2,5-diamino-6-hydroxy-4-(5-phosphoribosylamino)-pyrimidine + H2O + H(+) = 5-amino-6-(5-phospho-D-ribosylamino)uracil + NH4(+). It carries out the reaction 5-amino-6-(5-phospho-D-ribitylamino)uracil + NADP(+) = 5-amino-6-(5-phospho-D-ribosylamino)uracil + NADPH + H(+). It participates in cofactor biosynthesis; riboflavin biosynthesis; 5-amino-6-(D-ribitylamino)uracil from GTP: step 2/4. Its pathway is cofactor biosynthesis; riboflavin biosynthesis; 5-amino-6-(D-ribitylamino)uracil from GTP: step 3/4. In terms of biological role, converts 2,5-diamino-6-(ribosylamino)-4(3h)-pyrimidinone 5'-phosphate into 5-amino-6-(ribosylamino)-2,4(1h,3h)-pyrimidinedione 5'-phosphate. This chain is Riboflavin biosynthesis protein RibD (ribD), found in Mycobacterium tuberculosis (strain CDC 1551 / Oshkosh).